Consider the following 741-residue polypeptide: Catalase-peroxidase (741 aa).

Residues 1–21 form the signal peptide; sequence MRNFRRFTIALLVLFLGPIGA. A cross-link (tryptophyl-tyrosyl-methioninium (Trp-Tyr) (with M-257)) is located at residues 109–231; sequence WHSAGTYRIS…LAAVQMGLIY (123 aa). The active-site Proton acceptor is His-110. Residues 231 to 257 constitute a cross-link (tryptophyl-tyrosyl-methioninium (Tyr-Met) (with W-109)); sequence YVNPEGPNGNPDPLAAAKDIRETFGRM. Residue His-272 participates in heme b binding.

The protein belongs to the peroxidase family. Peroxidase/catalase subfamily. In terms of assembly, homodimer or homotetramer. Heme b serves as cofactor. Formation of the three residue Trp-Tyr-Met cross-link is important for the catalase, but not the peroxidase activity of the enzyme.

It catalyses the reaction H2O2 + AH2 = A + 2 H2O. It carries out the reaction 2 H2O2 = O2 + 2 H2O. In terms of biological role, bifunctional enzyme with both catalase and broad-spectrum peroxidase activity. The polypeptide is Catalase-peroxidase (Leptospira biflexa serovar Patoc (strain Patoc 1 / Ames)).